The primary structure comprises 311 residues: tRNA-cytidine(32) 2-sulfurtransferase (311 aa).

The PP-loop motif motif lies at 45–50 (SGGKDS). [4Fe-4S] cluster contacts are provided by Cys-120, Cys-123, and Cys-211.

The protein belongs to the TtcA family. In terms of assembly, homodimer. Requires Mg(2+) as cofactor. The cofactor is [4Fe-4S] cluster.

The protein localises to the cytoplasm. The enzyme catalyses cytidine(32) in tRNA + S-sulfanyl-L-cysteinyl-[cysteine desulfurase] + AH2 + ATP = 2-thiocytidine(32) in tRNA + L-cysteinyl-[cysteine desulfurase] + A + AMP + diphosphate + H(+). It participates in tRNA modification. Catalyzes the ATP-dependent 2-thiolation of cytidine in position 32 of tRNA, to form 2-thiocytidine (s(2)C32). The sulfur atoms are provided by the cysteine/cysteine desulfurase (IscS) system. In Shewanella halifaxensis (strain HAW-EB4), this protein is tRNA-cytidine(32) 2-sulfurtransferase.